A 107-amino-acid polypeptide reads, in one-letter code: Thiosulfate sulfurtransferase GlpE (107 aa).

Positions 19 to 107 (KDHNARMVDI…WNKAGLPVEK (89 aa)) constitute a Rhodanese domain. Catalysis depends on C67, which acts as the Cysteine persulfide intermediate.

This sequence belongs to the GlpE family.

The protein resides in the cytoplasm. It carries out the reaction thiosulfate + hydrogen cyanide = thiocyanate + sulfite + 2 H(+). The enzyme catalyses thiosulfate + [thioredoxin]-dithiol = [thioredoxin]-disulfide + hydrogen sulfide + sulfite + 2 H(+). Transferase that catalyzes the transfer of sulfur from thiosulfate to thiophilic acceptors such as cyanide or dithiols. May function in a CysM-independent thiosulfate assimilation pathway by catalyzing the conversion of thiosulfate to sulfite, which can then be used for L-cysteine biosynthesis. This is Thiosulfate sulfurtransferase GlpE from Aliivibrio salmonicida (strain LFI1238) (Vibrio salmonicida (strain LFI1238)).